The sequence spans 805 residues: DNA gyrase subunit B (805 aa).

The Toprim domain maps to 431-546 (CEMYIVEGDS…NECVYIAQPP (116 aa)). Glutamate 437, aspartate 511, and aspartate 513 together coordinate Mg(2+).

This sequence belongs to the type II topoisomerase GyrB family. In terms of assembly, heterotetramer, composed of two GyrA and two GyrB chains. In the heterotetramer, GyrA contains the active site tyrosine that forms a transient covalent intermediate with DNA, while GyrB binds cofactors and catalyzes ATP hydrolysis. It depends on Mg(2+) as a cofactor. Mn(2+) serves as cofactor. Ca(2+) is required as a cofactor.

Its subcellular location is the cytoplasm. The enzyme catalyses ATP-dependent breakage, passage and rejoining of double-stranded DNA.. A type II topoisomerase that negatively supercoils closed circular double-stranded (ds) DNA in an ATP-dependent manner to modulate DNA topology and maintain chromosomes in an underwound state. Negative supercoiling favors strand separation, and DNA replication, transcription, recombination and repair, all of which involve strand separation. Also able to catalyze the interconversion of other topological isomers of dsDNA rings, including catenanes and knotted rings. Type II topoisomerases break and join 2 DNA strands simultaneously in an ATP-dependent manner. This Chlamydia pneumoniae (Chlamydophila pneumoniae) protein is DNA gyrase subunit B.